The following is a 93-amino-acid chain: Phosphoribosyl-ATP pyrophosphatase (93 aa).

Belongs to the PRA-PH family.

The protein resides in the cytoplasm. The catalysed reaction is 1-(5-phospho-beta-D-ribosyl)-ATP + H2O = 1-(5-phospho-beta-D-ribosyl)-5'-AMP + diphosphate + H(+). It participates in amino-acid biosynthesis; L-histidine biosynthesis; L-histidine from 5-phospho-alpha-D-ribose 1-diphosphate: step 2/9. The protein is Phosphoribosyl-ATP pyrophosphatase of Mycolicibacterium smegmatis (strain ATCC 700084 / mc(2)155) (Mycobacterium smegmatis).